Reading from the N-terminus, the 521-residue chain is Bifunctional purine biosynthesis protein PurH (521 aa).

Residues 1 to 145 (MIKQALISVS…KNHKDVIVIC (145 aa)) form the MGS-like domain.

It belongs to the PurH family.

The catalysed reaction is (6R)-10-formyltetrahydrofolate + 5-amino-1-(5-phospho-beta-D-ribosyl)imidazole-4-carboxamide = 5-formamido-1-(5-phospho-D-ribosyl)imidazole-4-carboxamide + (6S)-5,6,7,8-tetrahydrofolate. It catalyses the reaction IMP + H2O = 5-formamido-1-(5-phospho-D-ribosyl)imidazole-4-carboxamide. It participates in purine metabolism; IMP biosynthesis via de novo pathway; 5-formamido-1-(5-phospho-D-ribosyl)imidazole-4-carboxamide from 5-amino-1-(5-phospho-D-ribosyl)imidazole-4-carboxamide (10-formyl THF route): step 1/1. It functions in the pathway purine metabolism; IMP biosynthesis via de novo pathway; IMP from 5-formamido-1-(5-phospho-D-ribosyl)imidazole-4-carboxamide: step 1/1. This is Bifunctional purine biosynthesis protein PurH from Herminiimonas arsenicoxydans.